Consider the following 99-residue polypeptide: NADH-quinone oxidoreductase subunit K (99 aa).

Helical transmembrane passes span 3-23, 28-48, and 59-79; these read PANYLYLSVLLFTIGASGVLL, IVMFMCVELMLNAVNLAFVTF, and MIAFFTMVVAACEVVVGLAII.

The protein belongs to the complex I subunit 4L family. In terms of assembly, NDH-1 is composed of 14 different subunits. Subunits NuoA, H, J, K, L, M, N constitute the membrane sector of the complex.

Its subcellular location is the cell membrane. The enzyme catalyses a quinone + NADH + 5 H(+)(in) = a quinol + NAD(+) + 4 H(+)(out). In terms of biological role, NDH-1 shuttles electrons from NADH, via FMN and iron-sulfur (Fe-S) centers, to quinones in the respiratory chain. The immediate electron acceptor for the enzyme in this species is believed to be a menaquinone. Couples the redox reaction to proton translocation (for every two electrons transferred, four hydrogen ions are translocated across the cytoplasmic membrane), and thus conserves the redox energy in a proton gradient. This chain is NADH-quinone oxidoreductase subunit K, found in Mycobacterium bovis (strain ATCC BAA-935 / AF2122/97).